Here is a 122-residue protein sequence, read N- to C-terminus: Large ribosomal subunit protein uL14 (122 aa).

Belongs to the universal ribosomal protein uL14 family. In terms of assembly, part of the 50S ribosomal subunit. Forms a cluster with proteins L3 and L19. In the 70S ribosome, L14 and L19 interact and together make contacts with the 16S rRNA in bridges B5 and B8.

In terms of biological role, binds to 23S rRNA. Forms part of two intersubunit bridges in the 70S ribosome. This is Large ribosomal subunit protein uL14 from Cupriavidus metallidurans (strain ATCC 43123 / DSM 2839 / NBRC 102507 / CH34) (Ralstonia metallidurans).